The following is a 465-amino-acid chain: ATP synthase subunit beta (465 aa).

An ATP-binding site is contributed by G152–T159.

This sequence belongs to the ATPase alpha/beta chains family. In terms of assembly, F-type ATPases have 2 components, CF(1) - the catalytic core - and CF(0) - the membrane proton channel. CF(1) has five subunits: alpha(3), beta(3), gamma(1), delta(1), epsilon(1). CF(0) has three main subunits: a(1), b(2) and c(9-12). The alpha and beta chains form an alternating ring which encloses part of the gamma chain. CF(1) is attached to CF(0) by a central stalk formed by the gamma and epsilon chains, while a peripheral stalk is formed by the delta and b chains.

Its subcellular location is the cell membrane. The catalysed reaction is ATP + H2O + 4 H(+)(in) = ADP + phosphate + 5 H(+)(out). In terms of biological role, produces ATP from ADP in the presence of a proton gradient across the membrane. The catalytic sites are hosted primarily by the beta subunits. The sequence is that of ATP synthase subunit beta from Ruminiclostridium cellulolyticum (strain ATCC 35319 / DSM 5812 / JCM 6584 / H10) (Clostridium cellulolyticum).